The sequence spans 827 residues: 6-phosphofructo-2-kinase 1 (827 aa).

Disordered stretches follow at residues 1–97 (MFKP…ENSA) and 149–175 (TRHH…DGLI). Positions 31–41 (SQDSSYDLLSR) are enriched in low complexity. Residues 42–59 (SSDDKIDAEKGPHDELSK) show a composition bias toward basic and acidic residues. The span at 72–97 (TPISSNWNSPGITEENTPSDSPENSA) shows a compositional bias: polar residues. Ser-92 carries the phosphoserine modification. At Thr-157 the chain carries Phosphothreonine. 190 to 197 (GLPATGKS) is a binding site for ATP. Catalysis depends on residues Asp-277 and Cys-309. Arg-343 contributes to the beta-D-fructose 6-phosphate binding site. The active-site Phosphoserine intermediate is the Ser-404. The active site involves Glu-497. His-565 functions as the Proton donor in the catalytic mechanism. A phosphoserine mark is found at Ser-644, Ser-652, Ser-659, and Ser-667. 2 disordered regions span residues 649 to 704 (APPS…SNFN) and 799 to 827 (HGKD…QSHV). Low complexity predominate over residues 671 to 682 (SASSSQSELSEQ). The segment covering 683-704 (PKNSVSAQTGSNNTTLIGSNFN) has biased composition (polar residues).

It catalyses the reaction beta-D-fructose 6-phosphate + ATP = beta-D-fructose 2,6-bisphosphate + ADP + H(+). Phosphorylation results in the activation of the kinase activity. Functionally, synthesis of fructose 2,6-bisphosphate. In Saccharomyces cerevisiae (strain ATCC 204508 / S288c) (Baker's yeast), this protein is 6-phosphofructo-2-kinase 1 (PFK26).